The chain runs to 454 residues: Bifunctional protein GlmU (454 aa).

A pyrophosphorylase region spans residues 1 to 227 (MKKLSVVILA…KMEVEGANNR (227 aa)). UDP-N-acetyl-alpha-D-glucosamine-binding positions include 9-12 (LAAG), Lys23, Gln74, 79-80 (GT), 101-103 (YGD), Gly138, Glu152, Asn167, and Asn225. Asp103 lines the Mg(2+) pocket. Asn225 is a Mg(2+) binding site. Positions 228–248 (LQLAALERYYQHKQAERLLLE) are linker. Positions 249 to 454 (GVMLIDPARF…AGWQRPTKKK (206 aa)) are N-acetyltransferase. Arg331 and Lys349 together coordinate UDP-N-acetyl-alpha-D-glucosamine. The active-site Proton acceptor is the His361. Residues Tyr364 and Asn375 each coordinate UDP-N-acetyl-alpha-D-glucosamine. Acetyl-CoA-binding positions include Ala378, 384–385 (NY), Ser403, Ala421, and Arg438.

This sequence in the N-terminal section; belongs to the N-acetylglucosamine-1-phosphate uridyltransferase family. In the C-terminal section; belongs to the transferase hexapeptide repeat family. As to quaternary structure, homotrimer. Mg(2+) serves as cofactor.

It is found in the cytoplasm. The catalysed reaction is alpha-D-glucosamine 1-phosphate + acetyl-CoA = N-acetyl-alpha-D-glucosamine 1-phosphate + CoA + H(+). It carries out the reaction N-acetyl-alpha-D-glucosamine 1-phosphate + UTP + H(+) = UDP-N-acetyl-alpha-D-glucosamine + diphosphate. It participates in nucleotide-sugar biosynthesis; UDP-N-acetyl-alpha-D-glucosamine biosynthesis; N-acetyl-alpha-D-glucosamine 1-phosphate from alpha-D-glucosamine 6-phosphate (route II): step 2/2. Its pathway is nucleotide-sugar biosynthesis; UDP-N-acetyl-alpha-D-glucosamine biosynthesis; UDP-N-acetyl-alpha-D-glucosamine from N-acetyl-alpha-D-glucosamine 1-phosphate: step 1/1. The protein operates within bacterial outer membrane biogenesis; LPS lipid A biosynthesis. Functionally, catalyzes the last two sequential reactions in the de novo biosynthetic pathway for UDP-N-acetylglucosamine (UDP-GlcNAc). The C-terminal domain catalyzes the transfer of acetyl group from acetyl coenzyme A to glucosamine-1-phosphate (GlcN-1-P) to produce N-acetylglucosamine-1-phosphate (GlcNAc-1-P), which is converted into UDP-GlcNAc by the transfer of uridine 5-monophosphate (from uridine 5-triphosphate), a reaction catalyzed by the N-terminal domain. The polypeptide is Bifunctional protein GlmU (Mannheimia succiniciproducens (strain KCTC 0769BP / MBEL55E)).